A 294-amino-acid polypeptide reads, in one-letter code: 4-hydroxy-tetrahydrodipicolinate synthase (294 aa).

Threonine 47 contacts pyruvate. Tyrosine 135 (proton donor/acceptor) is an active-site residue. Lysine 163 (schiff-base intermediate with substrate) is an active-site residue. Position 205 (threonine 205) interacts with pyruvate.

This sequence belongs to the DapA family. Homotetramer; dimer of dimers.

It is found in the cytoplasm. It carries out the reaction L-aspartate 4-semialdehyde + pyruvate = (2S,4S)-4-hydroxy-2,3,4,5-tetrahydrodipicolinate + H2O + H(+). The protein operates within amino-acid biosynthesis; L-lysine biosynthesis via DAP pathway; (S)-tetrahydrodipicolinate from L-aspartate: step 3/4. Functionally, catalyzes the condensation of (S)-aspartate-beta-semialdehyde [(S)-ASA] and pyruvate to 4-hydroxy-tetrahydrodipicolinate (HTPA). The sequence is that of 4-hydroxy-tetrahydrodipicolinate synthase from Rickettsia rickettsii.